The following is a 335-amino-acid chain: Fructose-1,6-bisphosphatase class 1 (335 aa).

Mg(2+)-binding residues include Glu-92, Asp-114, Leu-116, and Asp-117. Residues 117-120, Asn-210, Tyr-242, and Lys-274 contribute to the substrate site; that span reads DGSS. Residue Glu-280 coordinates Mg(2+).

Belongs to the FBPase class 1 family. In terms of assembly, homotetramer. It depends on Mg(2+) as a cofactor.

Its subcellular location is the cytoplasm. The catalysed reaction is beta-D-fructose 1,6-bisphosphate + H2O = beta-D-fructose 6-phosphate + phosphate. It functions in the pathway carbohydrate biosynthesis; gluconeogenesis. The chain is Fructose-1,6-bisphosphatase class 1 from Lawsonia intracellularis (strain PHE/MN1-00).